The following is a 765-amino-acid chain: Probable glycosyltransferase STELLO2 (765 aa).

The Cytoplasmic portion of the chain corresponds to 1-43 (MLVQDRVAPKPPKSRIRELPSRDRFAEPKILDFSSWVSDNVYR). The chain crosses the membrane as a helical span at residues 44–64 (IVIIFLFIVTVAAFFFLYNTT). The Lumenal portion of the chain corresponds to 65-765 (DTASLLCFQS…EGDPLLMELV (701 aa)). N-linked (GlcNAc...) asparagine glycosylation is found at Asn235 and Asn723.

The protein belongs to the STELLO family. As to quaternary structure, homo- and heterodimer with STL1. Interacts with CESA1, CESA3, CESA4, CESA6, CESA7 and CESA8, but not with GOT1. Expressed in cells that are expanding or producing secondary cell walls.

The protein localises to the golgi apparatus membrane. Probable glycosyltransferase regulating the assembly and trafficking of cellulose synthase complexes. The chain is Probable glycosyltransferase STELLO2 from Arabidopsis thaliana (Mouse-ear cress).